Reading from the N-terminus, the 103-residue chain is Large ribosomal subunit protein bL21 (103 aa).

It belongs to the bacterial ribosomal protein bL21 family. As to quaternary structure, part of the 50S ribosomal subunit. Contacts protein L20.

Its function is as follows. This protein binds to 23S rRNA in the presence of protein L20. This Chloroflexus aggregans (strain MD-66 / DSM 9485) protein is Large ribosomal subunit protein bL21.